A 316-amino-acid polypeptide reads, in one-letter code: Epoxide hydrolase 3 (316 aa).

An AB hydrolase-1 domain is found at 25 to 302 (PVVLLLHGFP…ACHFINQERP (278 aa)). Residue D101 is the Nucleophile of the active site. Y150 is an an epoxide binding site. Y230 functions as the Proton donor in the catalytic mechanism. Residue H295 is the Proton acceptor of the active site.

Belongs to the AB hydrolase superfamily. Epoxide hydrolase family. As to quaternary structure, homodimer. In terms of tissue distribution, highly expressed in young fruits 15 days after anthesis (15-DAA).

It carries out the reaction an epoxide + H2O = an ethanediol. The catalysed reaction is (24S)-24,25-epoxycucurbitadienol + H2O = (24R)-24,25-dihydroxycucurbitadienol. Its pathway is secondary metabolite biosynthesis; terpenoid biosynthesis. Epoxide hydrolase involved in the biosynthesis of cucurbitacin and mogroside tetracyclic triterpene natural products (e.g. siamenoside I and mogrosides IV, V and VI). Cucurbitacins have cytotoxic properties and exhibit deterrent taste as a defense barrier against herbivores. Mogrosides are nonsugar highly oxygenated compounds used as high-intensity zero-calorie sweeteners; they also possess pharmacological properties such as regulating immunity, lowering blood sugar and lipid levels, protecting the liver, and acting as antioxidants and antitumor agents. Catalyzes the hydrolysis of aromatic epoxide-containing substrates, such as the conversion of 24,25-epoxycucurbitadienol to 24,25-dihydroxycucurbitadienol. The chain is Epoxide hydrolase 3 from Siraitia grosvenorii (Monk's fruit).